The primary structure comprises 230 residues: Cytidylate kinase (230 aa).

12-20 (GPSGAGKGT) contributes to the ATP binding site.

The protein belongs to the cytidylate kinase family. Type 1 subfamily.

It is found in the cytoplasm. The enzyme catalyses CMP + ATP = CDP + ADP. The catalysed reaction is dCMP + ATP = dCDP + ADP. The polypeptide is Cytidylate kinase (Yersinia pseudotuberculosis serotype O:1b (strain IP 31758)).